Consider the following 286-residue polypeptide: 4-diphosphocytidyl-2-C-methyl-D-erythritol kinase (286 aa).

The active site involves Lys-11. 94–104 is an ATP binding site; that stretch reads PMGGGIGGGSS. Asp-136 is an active-site residue.

The protein belongs to the GHMP kinase family. IspE subfamily.

It carries out the reaction 4-CDP-2-C-methyl-D-erythritol + ATP = 4-CDP-2-C-methyl-D-erythritol 2-phosphate + ADP + H(+). The protein operates within isoprenoid biosynthesis; isopentenyl diphosphate biosynthesis via DXP pathway; isopentenyl diphosphate from 1-deoxy-D-xylulose 5-phosphate: step 3/6. In terms of biological role, catalyzes the phosphorylation of the position 2 hydroxy group of 4-diphosphocytidyl-2C-methyl-D-erythritol. The polypeptide is 4-diphosphocytidyl-2-C-methyl-D-erythritol kinase (Pseudomonas putida (strain ATCC 47054 / DSM 6125 / CFBP 8728 / NCIMB 11950 / KT2440)).